The chain runs to 699 residues: Transketolase (699 aa).

His-45 lines the substrate pocket. Thiamine diphosphate is bound by residues Thr-48, His-85, and 133–135 (GPL). Residue Asp-177 participates in Mg(2+) binding. Thiamine diphosphate-binding residues include Gly-178 and Asn-207. Residues Asn-207 and Ile-209 each coordinate Mg(2+). His-283, Arg-378, and Ser-405 together coordinate substrate. His-283 is a binding site for thiamine diphosphate. Glu-441 functions as the Proton donor in the catalytic mechanism. Phe-467 provides a ligand contact to thiamine diphosphate. His-491, Asp-499, and Arg-552 together coordinate substrate.

The protein belongs to the transketolase family. Homodimer. The cofactor is Mg(2+). It depends on Ca(2+) as a cofactor. Requires Mn(2+) as cofactor. Co(2+) serves as cofactor. Thiamine diphosphate is required as a cofactor.

The catalysed reaction is D-sedoheptulose 7-phosphate + D-glyceraldehyde 3-phosphate = aldehydo-D-ribose 5-phosphate + D-xylulose 5-phosphate. In terms of biological role, catalyzes the transfer of a two-carbon ketol group from a ketose donor to an aldose acceptor, via a covalent intermediate with the cofactor thiamine pyrophosphate. The polypeptide is Transketolase (tkt) (Mycobacterium leprae (strain TN)).